A 192-amino-acid polypeptide reads, in one-letter code: MENRWQVMIVWQVDRMRINTWKSLVKYHMYVSKKANRWFYRHHYDSHHPKISSEVHIPLGEARLVVTTYWGLHTGEKEWHLGQGVSIEWRKRRYSTQVDPGLADQLIHMYYFDCFAESAIRKAILGHIVSPSCEYQAGHNKVGSLQYLALAALIAPKKIKPPLPSVRKLTEDRWNKPQKTKGRRGSHTMNGH.

The tract at residues 14–17 (DRMR) is interaction with host APOBEC3F; F1-box. The interaction with host APOBEC3G; G-box stretch occupies residues 40 to 44 (YRHHY). The tract at residues 54-72 (EVHIPLGEARLVVTTYWGL) is interaction with host APOBEC3F and APOBEC3G; FG-box. Positions 74 to 79 (TGEKEW) are interaction with host APOBEC3F; F2-box. The RNA-binding stretch occupies residues 75–114 (GEKEWHLGQGVSIEWRKRRYSTQVDPGLADQLIHMYYFDC). Threonine 96 carries the phosphothreonine; by host MAP4K1 modification. Zn(2+)-binding residues include histidine 108, cysteine 114, cysteine 133, and histidine 139. The HCCH motif motif lies at 108–139 (HMYYFDCFAESAIRKAILGHIVSPSCEYQAGH). Phosphoserine; by host is present on serine 144. The BC-box-like motif signature appears at 144 to 153 (SLQYLALAAL). The interval 151-164 (AALIAPKKIKPPLP) is multimerization. Positions 151–180 (AALIAPKKIKPPLPSVRKLTEDRWNKPQKT) are SOCS box-like. At serine 165 the chain carries Phosphoserine; by host MAP4K1. The segment at 165 to 192 (SVRKLTEDRWNKPQKTKGRRGSHTMNGH) is disordered. The tract at residues 171–172 (ED) is membrane association. The span at 176-186 (KPQKTKGRRGS) shows a compositional bias: basic residues. The residue at position 188 (threonine 188) is a Phosphothreonine; by host.

The protein belongs to the primate lentivirus group Vif protein family. As to quaternary structure, homomultimer; in vitro and presumably in vivo. Interacts with viral RNA and Pr55Gag precursor; these interactions mediate Vif incorporation into the virion. Interacts with the viral reverse transcriptase. Forms cullin-5-RING E3 ubiquitin-protein ligase complex (ECS complex) by interacting with host CUL5, RBX2, elongin BC complex (ELOB and ELOC) and CBFB/CBF-beta. Within the ECS complex, Vif interacts directly with host CUL5, ELOC and APOBEC (APOBEC3F and APOBEC3G) substrates. The ECS complex also contains some single-stranded RNA (ssRNA) that acts as a glue that bridges Vif with APOBEC (APOBEC3F and APOBEC3G) substrates. Interacts with host UBCE7IP1 isoform 3/ZIN and possibly with SAT. Interacts with host tyrosine kinases HCK and FYN; these interactions may decrease level of phosphorylated APOBEC3G incorporation into virions. Interacts with host ABCE1; this interaction may play a role in protecting viral RNA from damage during viral assembly. Interacts with host MDM2; this interaction targets Vif for degradation by the proteasome. In terms of processing, processed in virion by the viral protease. Post-translationally, highly phosphorylated on serine and threonine residues. Polyubiquitinated and degraded by the proteasome in the presence of APOBEC3G.

The protein resides in the host cytoplasm. It localises to the host cell membrane. It is found in the virion. Its function is as follows. Counteracts the innate antiviral activity of host APOBEC3F and APOBEC3G by promoting their ubiquitination and degradation. Acts as a substrate recognition component of an E3 ubiquitin-protein ligase complex: mechanistically, Vif hijacks a host cullin-5-RING E3 ubiquitin-protein ligase complex (ECS complex) and the transcription coactivator CBFB/CBF-beta to form an active E3 ubiquitin-protein ligase complex that targets APOBEC3G and APOBEC3F for polyubiquitination, leading to their degradation by the proteasome. Vif interaction with APOBEC3G also blocks its cytidine deaminase activity in a proteasome-independent manner, suggesting a dual inhibitory mechanism. May interact directly with APOBEC3G mRNA in order to inhibit its translation. Association with CBFB/CBF-beta also inhibits the transcription coactivator activity of CBFB/CBF-beta. Seems to play a role in viral morphology by affecting the stability of the viral nucleoprotein core. Finally, Vif also contributes to the G2 cell cycle arrest observed in HIV infected cells. The sequence is that of Virion infectivity factor from Human immunodeficiency virus type 1 group M subtype D (isolate NDK) (HIV-1).